Consider the following 275-residue polypeptide: MLDIFKAVILGIVEGITEFLPISSTGHLVLVDEFIKMQQSTQFTDMFNVVIQLGAIMAVVVLYFHKLNPLSPRKDTTEKRNTWVLWSKVLLAVIPSVIVGLPLNDWMDEHLMNWAVVSATLIIYGVLFIVIENHNKRLTPRFANLQTLPYTTALFIGCFQLLSLIPGTSRSGATILGAILIGTSRYVATEFSFFMAIPTMFGASLLKLVKFFAHGGSLAGLQGAVLAVGVIVSFVVAYLSIRFLLDYIKKNDFKAFGWYRIVLGVLVIGYFTLIH.

The next 8 helical transmembrane spans lie at 2 to 22 (LDIFKAVILGIVEGITEFLPI), 43 to 63 (FTDMFNVVIQLGAIMAVVVLY), 83 to 103 (WVLWSKVLLAVIPSVIVGLPL), 111 to 131 (LMNWAVVSATLIIYGVLFIVI), 147 to 167 (TLPYTTALFIGCFQLLSLIPG), 186 to 206 (YVATEFSFFMAIPTMFGASLL), 221 to 241 (LQGAVLAVGVIVSFVVAYLSI), and 255 to 275 (AFGWYRIVLGVLVIGYFTLIH).

It belongs to the UppP family.

The protein resides in the cell membrane. It carries out the reaction di-trans,octa-cis-undecaprenyl diphosphate + H2O = di-trans,octa-cis-undecaprenyl phosphate + phosphate + H(+). Its function is as follows. Catalyzes the dephosphorylation of undecaprenyl diphosphate (UPP). Confers resistance to bacitracin. This is Undecaprenyl-diphosphatase from Lactiplantibacillus plantarum (strain ATCC BAA-793 / NCIMB 8826 / WCFS1) (Lactobacillus plantarum).